The primary structure comprises 101 residues: NADH-quinone oxidoreductase subunit K (101 aa).

3 helical membrane-spanning segments follow: residues 4–24 (LADY…GIFI), 30–50 (LVLL…FIAF), and 61–81 (VFVF…LAIV).

The protein belongs to the complex I subunit 4L family. In terms of assembly, NDH-1 is composed of 14 different subunits. Subunits NuoA, H, J, K, L, M, N constitute the membrane sector of the complex.

Its subcellular location is the cell inner membrane. It catalyses the reaction a quinone + NADH + 5 H(+)(in) = a quinol + NAD(+) + 4 H(+)(out). Its function is as follows. NDH-1 shuttles electrons from NADH, via FMN and iron-sulfur (Fe-S) centers, to quinones in the respiratory chain. The immediate electron acceptor for the enzyme in this species is believed to be ubiquinone. Couples the redox reaction to proton translocation (for every two electrons transferred, four hydrogen ions are translocated across the cytoplasmic membrane), and thus conserves the redox energy in a proton gradient. This is NADH-quinone oxidoreductase subunit K from Alkalilimnicola ehrlichii (strain ATCC BAA-1101 / DSM 17681 / MLHE-1).